The sequence spans 832 residues: tRNA ligase (832 aa).

K108 functions as the N6-AMP-lysine intermediate in the catalytic mechanism.

The protein belongs to the TRL1 family.

The catalysed reaction is ATP + (ribonucleotide)n-3'-hydroxyl + 5'-phospho-(ribonucleotide)m = (ribonucleotide)n+m + AMP + diphosphate.. Its function is as follows. One of the two proteins required for the splicing of precursor tRNA molecules containing introns. The ligation activity requires three enzymatic activities: phosphorylation of the 5' terminus of the 3' half-tRNA in the presence of ATP, opening of the 2'3'-cyclic phosphodiester bond of the 5' half-tRNA leaving a 2'-phosphomonoester and ligation of the two tRNA halves in an ATP-dependent reaction. This chain is tRNA ligase (LIG1), found in Candida albicans (strain SC5314 / ATCC MYA-2876) (Yeast).